The chain runs to 411 residues: LL-diaminopimelate aminotransferase (411 aa).

Residues tyrosine 15 and glycine 42 each coordinate substrate. Residues tyrosine 72, 108 to 109 (SK), tyrosine 132, asparagine 187, tyrosine 218, and 246 to 248 (SFS) contribute to the pyridoxal 5'-phosphate site. Substrate-binding residues include lysine 109, tyrosine 132, and asparagine 187. Lysine 249 carries the N6-(pyridoxal phosphate)lysine modification. Residues arginine 257 and asparagine 292 each contribute to the pyridoxal 5'-phosphate site. Residues asparagine 292 and arginine 388 each contribute to the substrate site.

Belongs to the class-I pyridoxal-phosphate-dependent aminotransferase family. LL-diaminopimelate aminotransferase subfamily. As to quaternary structure, homodimer. The cofactor is pyridoxal 5'-phosphate.

The catalysed reaction is (2S,6S)-2,6-diaminopimelate + 2-oxoglutarate = (S)-2,3,4,5-tetrahydrodipicolinate + L-glutamate + H2O + H(+). It participates in amino-acid biosynthesis; L-lysine biosynthesis via DAP pathway; LL-2,6-diaminopimelate from (S)-tetrahydrodipicolinate (aminotransferase route): step 1/1. Involved in the synthesis of meso-diaminopimelate (m-DAP or DL-DAP), required for both lysine and peptidoglycan biosynthesis. Catalyzes the direct conversion of tetrahydrodipicolinate to LL-diaminopimelate. The sequence is that of LL-diaminopimelate aminotransferase from Citrifermentans bemidjiense (strain ATCC BAA-1014 / DSM 16622 / JCM 12645 / Bem) (Geobacter bemidjiensis).